We begin with the raw amino-acid sequence, 192 residues long: Phage-like element PBSX protein XkdU (192 aa).

The protein to B.subtilis YqcA.

In Bacillus subtilis (strain 168), this protein is Phage-like element PBSX protein XkdU (xkdU).